Here is a 1701-residue protein sequence, read N- to C-terminus: Merozoite surface protein 1 (1701 aa).

Positions 1–19 are cleaved as a signal peptide; it reads MKIIFFLCSFLFFIINTQC. Residues 89-100 show a composition bias toward gly residues; the sequence is GSGGSVASGGSG. The segment at 89 to 118 is disordered; it reads GSGGSVASGGSGNSRRTNPSDNSSDSNTKT. Positions 101 to 116 are enriched in low complexity; it reads NSRRTNPSDNSSDSNT. N-linked (GlcNAc...) asparagine glycans are attached at residues N110 and N239. The interval 322 to 344 is disordered; the sequence is DAENPTTGSKPNPLPENKKKEVE. N-linked (GlcNAc...) asparagine glycosylation is found at N470, N536, and N607. A disordered region spans residues 704–739; that stretch reads SETTEDGGHSTHTLSQSGETEVTEETEVTEETVGHT. Residues 724–733 are compositionally biased toward acidic residues; the sequence is EVTEETEVTE. 7 N-linked (GlcNAc...) asparagine glycosylation sites follow: N802, N899, N919, N965, N991, N1089, and N1196. Positions 889-927 are enriched in low complexity; sequence TGTSSTSSPGNTTVNTAQSATHSNSQNQQSNASSTNTQN. Residues 889–936 are disordered; that stretch reads TGTSSTSSPGNTTVNTAQSATHSNSQNQQSNASSTNTQNGVAVSSGPA. Disordered regions lie at residues 1230-1259 and 1451-1472; these read TPPQPDVTPSPLSVRVSGSSGSTKEETQIP and KEKFPSSPPTTPPSPAKTDEQK. A compositionally biased stretch (polar residues) spans 1245–1259; the sequence is VSGSSGSTKEETQIP. Residues 1456-1465 show a composition bias toward pro residues; sequence SSPPTTPPSP. An N-linked (GlcNAc...) asparagine glycan is attached at N1588. EGF-like domains lie at 1592 to 1632 and 1633 to 1680; these read HQCV…VENP and NPTC…IFCS. Intrachain disulfides connect C1594–C1605, C1599–C1615, C1617–C1628, C1636–C1649, C1643–C1663, and C1665–C1679. S1680 is lipidated: GPI-anchor amidated serine. The propeptide at 1681 to 1701 is removed in mature form; sequence SSNFLGISFLLILMLILYSFI.

As to quaternary structure, forms a complex composed of subunits p83, p30, p38, and p42 which remain non-covalently associated; the complex is formed at the merozoite surface prior to egress from host erythrocytes. Forms a complex composed of processed MSP1 subunits, MSP6 subunit p36 and MSP7; the complex is formed at the merozoite surface prior to egress from host erythrocytes. Within the complex, interacts (via subunit p38) with MSP6 subunit p36 and (via subunits p83, p30 and p38) with MSP7 (via subunit p22). Forms a complex composed of MSP1, MSP6, DBLMSP1 and DBLMSP2. Within the complex, interacts (via subunit p38) with DBLMSP1 and DBLMSP2. Forms a complex composed of MSP1, and rhoptry proteins RhopH3, RAP1 and CLAG9/RhopH3. Within the complex, interacts (via subunits p42 and p19) with RhopH3 (via C-terminus). Forms a complex composed of MSP1, MSP6, MSP7, MSP9 and MSP3; within the complex, MSP6 and MSP9 mediate the binding to the host erythrocyte. Interacts (via subunits p19 and p42) with MSP9; the interaction is direct; MSP1 subunits p19 or p42, and MSP9 form a co-ligand complex that interacts with host SLC4A1/Band 3 protein. May interact with PFD6. Interacts with host spectrin. Interacts with host glycophorin GYPA in a sialic acid-independent manner. In terms of assembly, interacts with host proinflammatory cytokine S100P; the interaction blocks S100P inflammatory and chemotactic activities. As to quaternary structure, interacts with host SLC4A1/Band 3 (via 5ABC region) on the host erythrocyte surface in a sialic acid-independent manner. The p190 precursor is cleaved by SUB1 prior to merozoite egress into 4 subunits p83, p30, p38, and p42 which remain non-covalently associated. SUB1-mediated proteolytic cleavage occurs in an orderly manner; the first cleavage occurs at the p30/p38 site, followed by cleavage at the p83/p30 site, the last cleavage occurs at the p38/p42 site. The order of cleavage is essential for parasite viability. SUB1-mediated processing is essential for merozoite egress. In a second processing step during erythrocyte invasion, p42 is cleaved by SUB2 into p33 and p19; the latter remains attached to the merozoite surface via its GPI-anchor and is endocytosed during the subsequent ring stage.

Its subcellular location is the cell membrane. The protein localises to the secreted. The protein resides in the vacuole membrane. In terms of biological role, during the asexual blood stage, involved in merozoite egress from host erythrocytes possibly via its interaction with the host cytoskeleton protein spectrin resulting in the destabilization of the host cytoskeleton and thus leading to erythrocyte cell membrane rupture. Involved in the binding to host erythrocytes and is required for host erythrocyte invasion. Functionally, by binding to host proinflammatory cytokine S100P may interfere with host immune responses. Involved in merozoite invasion of host erythrocytes. May play a role in the biogenesis and/or function of the food vacuole during the intraerythrocytic development. This chain is Merozoite surface protein 1, found in Plasmodium falciparum (isolate mad20 / Papua New Guinea).